Consider the following 393-residue polypeptide: Glutamyl-tRNA reductase (393 aa).

Substrate is bound by residues 47 to 50 (TCSR), Ser98, 103 to 105 (ETD), and Gln109. Cys48 acts as the Nucleophile in catalysis. Residue 177 to 182 (GAGAVG) participates in NADP(+) binding.

This sequence belongs to the glutamyl-tRNA reductase family. In terms of assembly, homodimer.

It catalyses the reaction (S)-4-amino-5-oxopentanoate + tRNA(Glu) + NADP(+) = L-glutamyl-tRNA(Glu) + NADPH + H(+). Its pathway is porphyrin-containing compound metabolism; protoporphyrin-IX biosynthesis; 5-aminolevulinate from L-glutamyl-tRNA(Glu): step 1/2. Functionally, catalyzes the NADPH-dependent reduction of glutamyl-tRNA(Glu) to glutamate 1-semialdehyde (GSA). The sequence is that of Glutamyl-tRNA reductase from Pyrobaculum neutrophilum (strain DSM 2338 / JCM 9278 / NBRC 100436 / V24Sta) (Thermoproteus neutrophilus).